The sequence spans 426 residues: MLLTKEKNGMEIIEERESAVRSYSRSFPTVFEKAKDHLVWDVDGKEYIDFFAGAGSLNYGHNNEKMKTKIMDYVMNDGISHSLDMGTVARAEFLETFNEVILRPRNLDYKVMFPGPTGTNTVESALKIARKVTGRQNIISFTNAFHGMTLGSLSISGNSSIRNGAGVPLTNTISMPYDTFFKNGNAIDYLEQYLEDTGSGVDLPAAMILETVQGEGGINAASFEWLRGIEKLCRRYDILLIIDDVQAGCGRTGTFFSFEPAGIQPDIVCLSKSIGGYGLPLAITLIKPEHDIWEPGEHNGTFRGNNMAIVAATEALSYWKTDDLAKSVQKKSKIIKLRFEQIVEDYPELKATTRGRGFMQGIACGKGKEAYATKICAKAFEKGVIMETSGPSGEVVKFLGALTIDETSLIKGLGILEEATEEVVRQ.

Position 272 is an N6-(pyridoxal phosphate)lysine (Lys-272).

This sequence belongs to the class-III pyridoxal-phosphate-dependent aminotransferase family. Pyridoxal 5'-phosphate is required as a cofactor.

It catalyses the reaction L-2,4-diaminobutanoate + 2-oxoglutarate = L-aspartate 4-semialdehyde + L-glutamate. It participates in amine and polyamine biosynthesis; ectoine biosynthesis; L-ectoine from L-aspartate 4-semialdehyde: step 1/3. In terms of biological role, catalyzes reversively the conversion of L-aspartate beta-semialdehyde (ASA) to L-2,4-diaminobutyrate (DABA) by transamination with L-glutamate. The protein is Diaminobutyrate--2-oxoglutarate transaminase (ectB) of Sporosarcina pasteurii (Bacillus pasteurii).